The chain runs to 445 residues: Phosphoglucosamine mutase (445 aa).

Catalysis depends on serine 102, which acts as the Phosphoserine intermediate. Mg(2+) is bound by residues serine 102, aspartate 241, aspartate 243, and aspartate 245. Serine 102 bears the Phosphoserine mark.

This sequence belongs to the phosphohexose mutase family. Mg(2+) is required as a cofactor. Activated by phosphorylation.

It catalyses the reaction alpha-D-glucosamine 1-phosphate = D-glucosamine 6-phosphate. Its function is as follows. Catalyzes the conversion of glucosamine-6-phosphate to glucosamine-1-phosphate. In Shewanella sp. (strain ANA-3), this protein is Phosphoglucosamine mutase.